The following is a 142-amino-acid chain: Large ribosomal subunit protein uL11 (142 aa).

It belongs to the universal ribosomal protein uL11 family. In terms of assembly, part of the ribosomal stalk of the 50S ribosomal subunit. Interacts with L10 and the large rRNA to form the base of the stalk. L10 forms an elongated spine to which L12 dimers bind in a sequential fashion forming a multimeric L10(L12)X complex. In terms of processing, one or more lysine residues are methylated.

Functionally, forms part of the ribosomal stalk which helps the ribosome interact with GTP-bound translation factors. The sequence is that of Large ribosomal subunit protein uL11 from Shewanella oneidensis (strain ATCC 700550 / JCM 31522 / CIP 106686 / LMG 19005 / NCIMB 14063 / MR-1).